The sequence spans 501 residues: Glycerol kinase (501 aa).

Residue Thr-12 participates in ADP binding. ATP-binding residues include Thr-12, Thr-13, and Ser-14. Residue Thr-12 coordinates sn-glycerol 3-phosphate. ADP is bound at residue Arg-16. Sn-glycerol 3-phosphate contacts are provided by Arg-82, Glu-83, Tyr-134, and Asp-244. Residues Arg-82, Glu-83, Tyr-134, Asp-244, and Gln-245 each coordinate glycerol. ADP is bound by residues Thr-266 and Gly-310. Thr-266, Gly-310, Gln-314, and Gly-411 together coordinate ATP. Residues Gly-411 and Asn-415 each contribute to the ADP site.

It belongs to the FGGY kinase family.

It catalyses the reaction glycerol + ATP = sn-glycerol 3-phosphate + ADP + H(+). It functions in the pathway polyol metabolism; glycerol degradation via glycerol kinase pathway; sn-glycerol 3-phosphate from glycerol: step 1/1. With respect to regulation, inhibited by fructose 1,6-bisphosphate (FBP). Functionally, key enzyme in the regulation of glycerol uptake and metabolism. Catalyzes the phosphorylation of glycerol to yield sn-glycerol 3-phosphate. The protein is Glycerol kinase of Methylorubrum extorquens (strain PA1) (Methylobacterium extorquens).